The primary structure comprises 344 residues: MLIIDIKGTEISQQEIEILSHPLVAGLILFSRNFVDKAQLTALIKEIRQKVTKPLLITIDQEGGRVQRFREGFTRLPAMQAFGQLAKHPQEAIIWAKQAGWLMAAEMFALDIDLSFAPVLDLGHKCKAIGDRSFGEKVTQILPIAEGFIDGMREIGMATTGKHFPGHGQVIADSHLETPFDERAKANIFNYDIQPFEYFIAKNKLSAIMPAHVVYTQCDPHPASGSTYWLQQVLRQQLQFKGIIFSDDLGMQGANLMGNFLQRSEQAINAGCDLLLLCNQPEGVIEVLNGLTYQPNKLEQQKYLTLKKRRTIDFQQLASSPRYQQTKQHLEQLHECWLEWQTTH.

Residues D60, R68, R132, and 162 to 163 (KH) each bind substrate. H175 functions as the Proton donor/acceptor in the catalytic mechanism. D247 serves as the catalytic Nucleophile.

Belongs to the glycosyl hydrolase 3 family. NagZ subfamily.

It localises to the cytoplasm. The catalysed reaction is Hydrolysis of terminal non-reducing N-acetyl-D-hexosamine residues in N-acetyl-beta-D-hexosaminides.. It functions in the pathway cell wall biogenesis; peptidoglycan recycling. In terms of biological role, plays a role in peptidoglycan recycling by cleaving the terminal beta-1,4-linked N-acetylglucosamine (GlcNAc) from peptide-linked peptidoglycan fragments, giving rise to free GlcNAc, anhydro-N-acetylmuramic acid and anhydro-N-acetylmuramic acid-linked peptides. The chain is Beta-hexosaminidase from Haemophilus ducreyi (strain 35000HP / ATCC 700724).